A 216-amino-acid chain; its full sequence is MIF4G domain-containing protein A (216 aa).

Positions 2 to 199 (DSAWTALDME…LEILEFRASG (198 aa)) constitute an MIF4G domain.

Belongs to the MIF4GD family. In terms of assembly, interacts with eif4g1, eif4g2 and slbp; probably tethered by SLBP to the 3'-end of mRNAs ending with the histone stem-loop, it also interacts with eif4g1 which is bound to their 5'-end.

The protein localises to the cytoplasm. The protein resides in the nucleus. Functions in replication-dependent translation of histone mRNAs which differ from other eukaryotic mRNAs in that they do not end with a poly-A tail but a stem-loop. May participate in circularizing those mRNAs specifically enhancing their translation. This is MIF4G domain-containing protein A (mif4gda) from Danio rerio (Zebrafish).